The chain runs to 413 residues: Coiled-coil domain-containing protein 83 (413 aa).

Coiled-coil stretches lie at residues 32–186 (HCQI…RIIR) and 215–255 (IWEN…QLFN).

This chain is Coiled-coil domain-containing protein 83 (CCDC83), found in Bos taurus (Bovine).